The sequence spans 264 residues: Merozoite surface protein 2 (264 aa).

The first 20 residues, 1–20 (MKVIKTLSIINFFIFVTFNI), serve as a signal peptide directing secretion. N-linked (GlcNAc...) asparagine glycosylation is found at asparagine 22 and asparagine 36. Residues 44 to 190 (ANEGSNTNSV…PQTAENENPA (147 aa)) are polymorphic region. Residues 46–225 (EGSNTNSVGA…DSQKECTDGN (180 aa)) are disordered. 2 tandem repeats follow at residues 60 to 91 (ADTIASGSQRSTNSASTSTTNNGESQTTTPTA) and 92 to 123 (ADTIASGSQRSTNSASTSTTNNGESQTTTPTA). The interval 60–123 (ADTIASGSQR…GESQTTTPTA (64 aa)) is 2 X 32 AA perfects repeats. The segment covering 70–81 (STNSASTSTTNN) has biased composition (low complexity). Positions 82–101 (GESQTTTPTAADTIASGSQR) are enriched in polar residues. Positions 102–145 (STNSASTSTTNNGESQTTTPTAADTPTTTESNSPSPPITTTESS) are enriched in low complexity. An N-linked (GlcNAc...) asparagine glycan is attached at asparagine 152. The span at 154–166 (TDGKGEESEKQNE) shows a compositional bias: basic and acidic residues. 2 N-linked (GlcNAc...) asparagine glycosylation sites follow: asparagine 168 and asparagine 213. Cysteine 221 and cysteine 229 are oxidised to a cystine. Residues asparagine 237 and asparagine 238 are each glycosylated (N-linked (GlcNAc...) asparagine). Asparagine 238 carries GPI-anchor amidated asparagine lipidation. A propeptide spans 239 to 264 (SSNIASINKFVVLISATLVLSFAIFI) (removed in mature form).

The protein localises to the cell membrane. Its function is as follows. May play a role in the merozoite attachment to the erythrocyte. This chain is Merozoite surface protein 2, found in Plasmodium falciparum (isolate fid3 / India).